Here is a 205-residue protein sequence, read N- to C-terminus: Small ribosomal subunit protein uS4 (205 aa).

The 69-residue stretch at Arg95 to Pro163 folds into the S4 RNA-binding domain.

It belongs to the universal ribosomal protein uS4 family. As to quaternary structure, part of the 30S ribosomal subunit. Contacts protein S5. The interaction surface between S4 and S5 is involved in control of translational fidelity.

Its function is as follows. One of the primary rRNA binding proteins, it binds directly to 16S rRNA where it nucleates assembly of the body of the 30S subunit. With S5 and S12 plays an important role in translational accuracy. The chain is Small ribosomal subunit protein uS4 from Persephonella marina (strain DSM 14350 / EX-H1).